A 215-amino-acid polypeptide reads, in one-letter code: Adenylate kinase (215 aa).

10 to 15 serves as a coordination point for ATP; sequence GAGKGT. Residues 30–59 form an NMP region; sequence STGDMFRAAMKNNTELGKKAKSFMDNGDLV. AMP contacts are provided by residues threonine 31, arginine 36, 57–59, 85–88, and glutamine 92; these read DLV and GFPR. The segment at 126 to 163 is LID; that stretch reads GRWICRTCGKTYHEIYNPPKVPGKCDLDGGELYQREDD. Arginine 127 is an ATP binding site. Positions 130 and 133 each coordinate Zn(2+). ATP is bound at residue 136–137; the sequence is TY. 2 residues coordinate Zn(2+): cysteine 150 and aspartate 153. Arginine 160 and arginine 171 together coordinate AMP. Glutamine 199 serves as a coordination point for ATP.

It belongs to the adenylate kinase family. In terms of assembly, monomer.

Its subcellular location is the cytoplasm. The catalysed reaction is AMP + ATP = 2 ADP. The protein operates within purine metabolism; AMP biosynthesis via salvage pathway; AMP from ADP: step 1/1. Functionally, catalyzes the reversible transfer of the terminal phosphate group between ATP and AMP. Plays an important role in cellular energy homeostasis and in adenine nucleotide metabolism. The chain is Adenylate kinase from Listeria innocua serovar 6a (strain ATCC BAA-680 / CLIP 11262).